A 367-amino-acid polypeptide reads, in one-letter code: Apolipoprotein A-V (367 aa).

An N-terminal signal peptide occupies residues 1–20 (MVAVLTWALALLSAFATVQT). Ser56 carries the post-translational modification Phosphoserine. Positions 71-90 (LGPLSGQGREPPGLPHDPEG) are disordered.

Belongs to the apolipoprotein A1/A4/E family. In terms of assembly, interacts with GPIHBP1. Interacts with SORL1; this interaction leads to APOA5 internalization and sorting either to lysosomes and degradation, or to the trans-Golgi network. Post-translationally, phosphorylated by FAM20C in the extracellular medium.

It is found in the secreted. It localises to the early endosome. The protein localises to the late endosome. The protein resides in the golgi apparatus. Its subcellular location is the trans-Golgi network. Its function is as follows. Minor apolipoprotein mainly associated with HDL and to a lesser extent with VLDL. May also be associated with chylomicrons. Important determinant of plasma triglyceride (TG) levels by both being a potent stimulator of apo-CII lipoprotein lipase (LPL) TG hydrolysis and an inhibitor of the hepatic VLDL-TG production rate (without affecting the VLDL-apoB production rate). Activates poorly lecithin:cholesterol acyltransferase (LCAT) and does not enhance efflux of cholesterol from macrophages. Binds heparin. In Leptonychotes weddellii (Weddell seal), this protein is Apolipoprotein A-V (APOA5).